The primary structure comprises 172 residues: Bifunctional protein PyrR (172 aa).

Substrate-binding positions include 36–37 (TG), Arg77, 94–102 (DDVLMSGRT), and Val151. Residues 90–102 (LVLVDDVLMSGRT) carry the PRPP-binding motif.

It belongs to the purine/pyrimidine phosphoribosyltransferase family. PyrR subfamily.

It carries out the reaction UMP + diphosphate = 5-phospho-alpha-D-ribose 1-diphosphate + uracil. Its function is as follows. Regulates the transcription of the pyrimidine nucleotide (pyr) operon in response to exogenous pyrimidines. In terms of biological role, also displays a weak uracil phosphoribosyltransferase activity which is not physiologically significant. The sequence is that of Bifunctional protein PyrR from Pseudomonas putida (Arthrobacter siderocapsulatus).